Consider the following 289-residue polypeptide: 4-hydroxy-3-methylbut-2-enyl diphosphate reductase (289 aa).

Cys-13 contributes to the [4Fe-4S] cluster binding site. (2E)-4-hydroxy-3-methylbut-2-enyl diphosphate contacts are provided by His-42 and His-76. Dimethylallyl diphosphate-binding residues include His-42 and His-76. 2 residues coordinate isopentenyl diphosphate: His-42 and His-76. Cys-98 is a binding site for [4Fe-4S] cluster. Position 130 (His-130) interacts with (2E)-4-hydroxy-3-methylbut-2-enyl diphosphate. Residue His-130 participates in dimethylallyl diphosphate binding. His-130 contacts isopentenyl diphosphate. Glu-132 (proton donor) is an active-site residue. Thr-168 is a binding site for (2E)-4-hydroxy-3-methylbut-2-enyl diphosphate. Cys-199 provides a ligand contact to [4Fe-4S] cluster. Ser-227, Ser-228, Asn-229, and Ser-272 together coordinate (2E)-4-hydroxy-3-methylbut-2-enyl diphosphate. Residues Ser-227, Ser-228, Asn-229, and Ser-272 each coordinate dimethylallyl diphosphate. Isopentenyl diphosphate is bound by residues Ser-227, Ser-228, Asn-229, and Ser-272.

It belongs to the IspH family. [4Fe-4S] cluster is required as a cofactor.

It carries out the reaction isopentenyl diphosphate + 2 oxidized [2Fe-2S]-[ferredoxin] + H2O = (2E)-4-hydroxy-3-methylbut-2-enyl diphosphate + 2 reduced [2Fe-2S]-[ferredoxin] + 2 H(+). The catalysed reaction is dimethylallyl diphosphate + 2 oxidized [2Fe-2S]-[ferredoxin] + H2O = (2E)-4-hydroxy-3-methylbut-2-enyl diphosphate + 2 reduced [2Fe-2S]-[ferredoxin] + 2 H(+). It functions in the pathway isoprenoid biosynthesis; dimethylallyl diphosphate biosynthesis; dimethylallyl diphosphate from (2E)-4-hydroxy-3-methylbutenyl diphosphate: step 1/1. It participates in isoprenoid biosynthesis; isopentenyl diphosphate biosynthesis via DXP pathway; isopentenyl diphosphate from 1-deoxy-D-xylulose 5-phosphate: step 6/6. Catalyzes the conversion of 1-hydroxy-2-methyl-2-(E)-butenyl 4-diphosphate (HMBPP) into a mixture of isopentenyl diphosphate (IPP) and dimethylallyl diphosphate (DMAPP). Acts in the terminal step of the DOXP/MEP pathway for isoprenoid precursor biosynthesis. The polypeptide is 4-hydroxy-3-methylbut-2-enyl diphosphate reductase (Porphyromonas gingivalis (strain ATCC BAA-308 / W83)).